The following is a 378-amino-acid chain: Succinyl-diaminopimelate desuccinylase (378 aa).

Residue H77 participates in Zn(2+) binding. D79 is an active-site residue. D108 lines the Zn(2+) pocket. The active-site Proton acceptor is the E138. Residues E139, E167, and H350 each contribute to the Zn(2+) site.

This sequence belongs to the peptidase M20A family. DapE subfamily. Homodimer. It depends on Zn(2+) as a cofactor. Requires Co(2+) as cofactor.

The enzyme catalyses N-succinyl-(2S,6S)-2,6-diaminopimelate + H2O = (2S,6S)-2,6-diaminopimelate + succinate. It functions in the pathway amino-acid biosynthesis; L-lysine biosynthesis via DAP pathway; LL-2,6-diaminopimelate from (S)-tetrahydrodipicolinate (succinylase route): step 3/3. Catalyzes the hydrolysis of N-succinyl-L,L-diaminopimelic acid (SDAP), forming succinate and LL-2,6-diaminopimelate (DAP), an intermediate involved in the bacterial biosynthesis of lysine and meso-diaminopimelic acid, an essential component of bacterial cell walls. The sequence is that of Succinyl-diaminopimelate desuccinylase from Erythrobacter litoralis (strain HTCC2594).